Consider the following 87-residue polypeptide: CRISPR-associated endoribonuclease Cas2 (87 aa).

Asp-8 serves as a coordination point for Mg(2+).

It belongs to the CRISPR-associated endoribonuclease Cas2 protein family. Homodimer, forms a heterotetramer with a Cas1 homodimer. The cofactor is Mg(2+).

In terms of biological role, CRISPR (clustered regularly interspaced short palindromic repeat), is an adaptive immune system that provides protection against mobile genetic elements (viruses, transposable elements and conjugative plasmids). CRISPR clusters contain sequences complementary to antecedent mobile elements and target invading nucleic acids. CRISPR clusters are transcribed and processed into CRISPR RNA (crRNA). Functions as a ssRNA-specific endoribonuclease. Involved in the integration of spacer DNA into the CRISPR cassette. This is CRISPR-associated endoribonuclease Cas2 from Methanosarcina acetivorans (strain ATCC 35395 / DSM 2834 / JCM 12185 / C2A).